Consider the following 364-residue polypeptide: MQESGLKPILWKNKELILLDQRVLPGTTSYITAKTLEDCIFAIREMVVRGAPAIAITGAFGITLYWNSLVSKPSFSELKLKLSELLESRPTAVNLRLAIEEFSSRFPESNYSSFSLEEIQKGAEELALFMLSEDLENNLTLSKYALSLFPKQPSSLNIITHCNTGALATAGHGTALGVIRSLRDAGHSLTVFADETRPYLQGARLTAWELQEEKIQSFLITDNMAGWVMSSRKIDAVIVGADRIASNGDTANKIGTYPLAIVAKHHGVPFYVAATAKSMDFRIPNGSYIPIEMRKEEEITSFGFLKDSDGKPLLKEGVIAPKGMKALNPSFDVTPASLITGIITEKGIVSPVTEENLKKIFQSI.

Substrate contacts are provided by residues 49–51 (RGA), arginine 89, and glutamine 201. Aspartate 242 acts as the Proton donor in catalysis. Position 252–253 (252–253 (NK)) interacts with substrate.

The protein belongs to the eIF-2B alpha/beta/delta subunits family. MtnA subfamily.

The enzyme catalyses 5-(methylsulfanyl)-alpha-D-ribose 1-phosphate = 5-(methylsulfanyl)-D-ribulose 1-phosphate. The protein operates within amino-acid biosynthesis; L-methionine biosynthesis via salvage pathway; L-methionine from S-methyl-5-thio-alpha-D-ribose 1-phosphate: step 1/6. In terms of biological role, catalyzes the interconversion of methylthioribose-1-phosphate (MTR-1-P) into methylthioribulose-1-phosphate (MTRu-1-P). The protein is Methylthioribose-1-phosphate isomerase of Leptospira interrogans serogroup Icterohaemorrhagiae serovar copenhageni (strain Fiocruz L1-130).